A 246-amino-acid chain; its full sequence is Ly6/PLAUR domain-containing protein 4 (246 aa).

A signal peptide spans 1 to 26 (MGPQHLRLVQLFCLLGAISTLPRAGA). Asparagine 117 is a glycosylation site (N-linked (GlcNAc...) asparagine). The UPAR/Ly6 domain maps to 142–223 (CPTCVGEHMK…LNILEKSQIV (82 aa)). The GPI-anchor amidated alanine moiety is linked to residue alanine 225. Positions 226–246 (ASSRQDPAWGVVLGLLFAFRD) are cleaved as a propeptide — removed in mature form.

Its subcellular location is the cell membrane. The chain is Ly6/PLAUR domain-containing protein 4 (LYPD4) from Homo sapiens (Human).